Here is a 750-residue protein sequence, read N- to C-terminus: Methylmalonyl-CoA mutase, mitochondrial (750 aa).

The transit peptide at Met-1 to Leu-32 directs the protein to the mitochondrion. Gln-50 is a malonyl-CoA binding site. Residue Lys-89 is modified to N6-acetyllysine. Residues Tyr-96–Met-99 and Thr-106–Tyr-110 contribute to the malonyl-CoA site. Lys-212 is modified (N6-acetyllysine). Malonyl-CoA is bound by residues Thr-216 to Gln-218, Arg-228, Lys-255, His-265, and Arg-304 to Ser-306. Lys-335 bears the N6-acetyllysine mark. An N6-succinyllysine modification is found at Lys-343. A Phosphoserine modification is found at Ser-481. Lys-595 bears the N6-succinyllysine mark. An N6-acetyllysine modification is found at Lys-602. Positions Arg-614–Lys-746 constitute a B12-binding domain. His-627 contributes to the adenosylcob(III)alamin binding site.

It belongs to the methylmalonyl-CoA mutase family. As to quaternary structure, homodimer. Interacts (the apoenzyme form) with MMAA; the interaction is GTP dependent. The cofactor is adenosylcob(III)alamin.

The protein localises to the mitochondrion matrix. The protein resides in the mitochondrion. Its subcellular location is the cytoplasm. It carries out the reaction (R)-methylmalonyl-CoA = succinyl-CoA. With respect to regulation, during catalysis, accumulation of oxidized inactive cofactor hydroxocobalamin (OH2Cbl) leads to loss of MMUT activity. Interaction with MMAA decreases the rate of OH2Cbl formation and promotes the replacement of OH2Cbl by the active cofactor adenosylcobalamin (AdoCbl), thereby restoring MMUT activity. Inhibited by itaconyl-CoA, a metabolite that inactivates the coenzyme B12 cofactor. Inhibited at high concentration of substrate. Functionally, catalyzes the reversible isomerization of methylmalonyl-CoA (MMCoA) (generated from branched-chain amino acid metabolism and degradation of dietary odd chain fatty acids and cholesterol) to succinyl-CoA (3-carboxypropionyl-CoA), a key intermediate of the tricarboxylic acid cycle. In Homo sapiens (Human), this protein is Methylmalonyl-CoA mutase, mitochondrial.